We begin with the raw amino-acid sequence, 526 residues long: O-phosphoserine--tRNA(Cys) ligase (526 aa).

Substrate-binding positions include 189–191 (HMT), 234–236 (SAS), 276–277 (YY), and Asn-319.

The protein belongs to the class-II aminoacyl-tRNA synthetase family. O-phosphoseryl-tRNA(Cys) synthetase subfamily. In terms of assembly, homotetramer. Interacts with SepCysS.

It catalyses the reaction tRNA(Cys) + O-phospho-L-serine + ATP = O-phospho-L-seryl-tRNA(Cys) + AMP + diphosphate. Catalyzes the attachment of O-phosphoserine (Sep) to tRNA(Cys). The polypeptide is O-phosphoserine--tRNA(Cys) ligase (Methanocorpusculum labreanum (strain ATCC 43576 / DSM 4855 / Z)).